The primary structure comprises 258 residues: Uridylate cyclase (258 aa).

The Guanylate cyclase domain occupies 50–190 (AAIFIDLRGS…DVVNKASKMC (141 aa)). F53 contacts a ribonucleoside 5'-triphosphate. Mn(2+) is bound by residues D55 and D102.

It belongs to the adenylyl cyclase class-4/guanylyl cyclase family. Pyrimidine cyclase subfamily. In terms of assembly, homodimer. Mn(2+) serves as cofactor.

The protein localises to the cytoplasm. It carries out the reaction UTP = 3',5'-cyclic UMP + diphosphate. Functionally, pycsar (pyrimidine cyclase system for antiphage resistance) provides immunity against bacteriophage. The pyrimidine cyclase (PycC) synthesizes cyclic nucleotides in response to infection; these serve as specific second messenger signals. The signals activate the adjacent effector, leading to bacterial cell death and abortive phage infection. A clade C Pycsar system. Its function is as follows. The pyrimidine cyclase gene of a two-gene Pycsar system, weakly generates cyclic UMP (cUMP) from UTP, has little to no activity on ATP, CTP or GTP. Expression of this and adjacent effector GmPycTM (AC P0DV43) probably confers resistance to bacteriophage. The genes are probably only expressed in response to bacteriophage infection. This is Uridylate cyclase from Gulbenkiania mobilis.